The following is a 240-amino-acid chain: uncharacterized protein (240 aa).

The tract at residues glutamine 93 to glutamine 160 is disordered. Composition is skewed to low complexity over residues alanine 110–glycine 119 and glycine 129–asparagine 150.

This is an uncharacterized protein from Streptomyces viridochromogenes.